The following is a 184-amino-acid chain: ATP synthase subunit delta (184 aa).

The protein belongs to the ATPase delta chain family. In terms of assembly, F-type ATPases have 2 components, F(1) - the catalytic core - and F(0) - the membrane proton channel. F(1) has five subunits: alpha(3), beta(3), gamma(1), delta(1), epsilon(1). F(0) has three main subunits: a(1), b(2) and c(10-14). The alpha and beta chains form an alternating ring which encloses part of the gamma chain. F(1) is attached to F(0) by a central stalk formed by the gamma and epsilon chains, while a peripheral stalk is formed by the delta and b chains.

It is found in the cell inner membrane. F(1)F(0) ATP synthase produces ATP from ADP in the presence of a proton or sodium gradient. F-type ATPases consist of two structural domains, F(1) containing the extramembraneous catalytic core and F(0) containing the membrane proton channel, linked together by a central stalk and a peripheral stalk. During catalysis, ATP synthesis in the catalytic domain of F(1) is coupled via a rotary mechanism of the central stalk subunits to proton translocation. In terms of biological role, this protein is part of the stalk that links CF(0) to CF(1). It either transmits conformational changes from CF(0) to CF(1) or is implicated in proton conduction. The chain is ATP synthase subunit delta from Rickettsia conorii (strain ATCC VR-613 / Malish 7).